Here is a 490-residue protein sequence, read N- to C-terminus: Pentatricopeptide repeat-containing protein At2g20710, mitochondrial (490 aa).

Residues 1 to 86 constitute a mitochondrion transit peptide; it reads MKHLLLLRLV…IKMLRKFSRF (86 aa). PPR repeat units lie at residues 138 to 172, 173 to 207, 208 to 243, 244 to 274, 280 to 310, 314 to 344, 349 to 379, and 384 to 421; these read NYHL…GFLK, GCLP…TVKP, DIFT…GLHL, DWRT…SEQM, RKHA…YKEL, YNTG…WEAG, DIRI…LVQK, and DTST…GWRP.

This sequence belongs to the PPR family. P subfamily.

It is found in the mitochondrion. The sequence is that of Pentatricopeptide repeat-containing protein At2g20710, mitochondrial from Arabidopsis thaliana (Mouse-ear cress).